The following is a 93-amino-acid chain: Ribonuclease P protein component 1 (93 aa).

Belongs to the eukaryotic/archaeal RNase P protein component 1 family. In terms of assembly, consists of a catalytic RNA component and at least 4-5 protein subunits.

It localises to the cytoplasm. The enzyme catalyses Endonucleolytic cleavage of RNA, removing 5'-extranucleotides from tRNA precursor.. Part of ribonuclease P, a protein complex that generates mature tRNA molecules by cleaving their 5'-ends. The polypeptide is Ribonuclease P protein component 1 (Methanothermobacter thermautotrophicus (strain ATCC 29096 / DSM 1053 / JCM 10044 / NBRC 100330 / Delta H) (Methanobacterium thermoautotrophicum)).